The following is a 389-amino-acid chain: Succinate--CoA ligase [ADP-forming] subunit beta (389 aa).

Residues 9 to 244 (KQLLAEYGIP…KTQEDETEVT (236 aa)) enclose the ATP-grasp domain. ATP-binding positions include Lys-46, 53–55 (GRG), Gly-102, and Glu-107. The Mg(2+) site is built by Asn-199 and Asp-213. Residues Asn-264 and 321-323 (GIV) each bind substrate.

It belongs to the succinate/malate CoA ligase beta subunit family. In terms of assembly, heterotetramer of two alpha and two beta subunits. Mg(2+) is required as a cofactor.

The catalysed reaction is succinate + ATP + CoA = succinyl-CoA + ADP + phosphate. It catalyses the reaction GTP + succinate + CoA = succinyl-CoA + GDP + phosphate. It functions in the pathway carbohydrate metabolism; tricarboxylic acid cycle; succinate from succinyl-CoA (ligase route): step 1/1. Its function is as follows. Succinyl-CoA synthetase functions in the citric acid cycle (TCA), coupling the hydrolysis of succinyl-CoA to the synthesis of either ATP or GTP and thus represents the only step of substrate-level phosphorylation in the TCA. The beta subunit provides nucleotide specificity of the enzyme and binds the substrate succinate, while the binding sites for coenzyme A and phosphate are found in the alpha subunit. This chain is Succinate--CoA ligase [ADP-forming] subunit beta, found in Xanthomonas axonopodis pv. citri (strain 306).